Here is a 429-residue protein sequence, read N- to C-terminus: G2/mitotic-specific cyclin-B1 (429 aa).

Polar residues predominate over residues 1–14; that stretch reads MALRVTRNTKLNTE. Disordered regions lie at residues 1-21 and 71-128; these read MALRVTRNTKLNTENKAKVSM and TGKV…PMET. An N6-acetyllysine modification is found at lysine 73. The segment covering 92–106 has biased composition (acidic residues); sequence PEVELAEPEPEPEPV. Position 122 is a phosphoserine; by CDK1 (serine 122). At serine 124 the chain carries Phosphoserine. Serine 129 is modified (phosphoserine; by PLK1). At serine 143 the chain carries Phosphoserine. 2 interaction with CDK2 regions span residues 165–173 and 254–257; these read EYVKDIYAY and YEEM. Phosphothreonine is present on threonine 317.

This sequence belongs to the cyclin family. Cyclin AB subfamily. In terms of assembly, interacts with the CDC2 protein kinase to form a serine/threonine kinase holoenzyme complex also known as maturation promoting factor (MPF). The cyclin subunit imparts substrate specificity to the complex. Binds HEI10. Interacts with catalytically active RALBP1 and CDC2 during mitosis to form an endocytotic complex during interphase. Interacts with CCNF; interaction is required for nuclear localization. Interacts with CDK5RAP3. Interacts with RFPL4A and UBE2A. Interacts with INCA1. In terms of processing, ubiquitinated by the SCF(NIPA) complex during interphase, leading to its destruction. Not ubiquitinated during G2/M phases. Phosphorylated by PLK1 at Ser-129 on centrosomes during prophase: phosphorylation by PLK1 does not cause nuclear import. Phosphorylation at Ser-143 was also reported to be mediated by PLK1 but Ser-129 seems to be the primary phosphorylation site.

It localises to the cytoplasm. The protein localises to the nucleus. The protein resides in the cytoskeleton. It is found in the microtubule organizing center. Its subcellular location is the centrosome. In terms of biological role, essential for the control of the cell cycle at the G2/M (mitosis) transition. The protein is G2/mitotic-specific cyclin-B1 (CCNB1) of Cricetulus griseus (Chinese hamster).